A 595-amino-acid chain; its full sequence is UvrABC system protein C (595 aa).

The GIY-YIG domain maps to 17-94; sequence FEPGCYLMKD…IKQYQPRYNI (78 aa). The 36-residue stretch at 199–234 folds into the UVR domain; sequence KTIIKNLESRMQAASENLEFEQAKEYRDLIQNIHNL.

This sequence belongs to the UvrC family. Interacts with UvrB in an incision complex.

It is found in the cytoplasm. The UvrABC repair system catalyzes the recognition and processing of DNA lesions. UvrC both incises the 5' and 3' sides of the lesion. The N-terminal half is responsible for the 3' incision and the C-terminal half is responsible for the 5' incision. The sequence is that of UvrABC system protein C from Staphylococcus carnosus (strain TM300).